The primary structure comprises 1122 residues: TSET complex member tstF (1122 aa).

Over residues 88-126 (SSSASGINGTNNNNSGSNSSNNNNNNNGSLSNSPNNNNN) the composition is skewed to low complexity. Disordered stretches follow at residues 88-131 (SSSA…AFIG) and 178-215 (QTLH…STNS). Residues 178–190 (QTLHNRSPNNTIK) show a composition bias toward polar residues. The span at 191–215 (LSPNSSNNDSLNNNNNNINNNSTNS) shows a compositional bias: low complexity. WD repeat units lie at residues 298–337 (FENK…IEKQ), 342–381 (PKGT…LATQ), and 383–422 (SKVH…EVSK). A disordered region spans residues 731 to 775 (NGSVGGSSSNNSANSNNSNNNNNNNNNNSNNSNNNNNSSQPILEP).

As to quaternary structure, component of the TSET complex, a heterohexamer composed of tstA, tstB, tstC, tstD, tstE and tstF, which may act in plasma membrane turnover. tstA, tstB, tstC and tstD are likely to be the core complex members with tstE and tstF acting as associated scaffold proteins.

The protein is TSET complex member tstF of Dictyostelium discoideum (Social amoeba).